Reading from the N-terminus, the 89-residue chain is Small ribosomal subunit protein uS15 (89 aa).

Belongs to the universal ribosomal protein uS15 family. As to quaternary structure, part of the 30S ribosomal subunit. Forms a bridge to the 50S subunit in the 70S ribosome, contacting the 23S rRNA.

Functionally, one of the primary rRNA binding proteins, it binds directly to 16S rRNA where it helps nucleate assembly of the platform of the 30S subunit by binding and bridging several RNA helices of the 16S rRNA. Forms an intersubunit bridge (bridge B4) with the 23S rRNA of the 50S subunit in the ribosome. This is Small ribosomal subunit protein uS15 from Bacteroides thetaiotaomicron (strain ATCC 29148 / DSM 2079 / JCM 5827 / CCUG 10774 / NCTC 10582 / VPI-5482 / E50).